The following is a 470-amino-acid chain: Protein nucleotidyltransferase YdiU (470 aa).

ATP contacts are provided by glycine 86, glycine 88, arginine 89, lysine 109, aspartate 121, glycine 122, arginine 172, and arginine 179. Aspartate 244 acts as the Proton acceptor in catalysis. The Mg(2+) site is built by asparagine 245 and aspartate 254. Aspartate 254 is a binding site for ATP.

The protein belongs to the SELO family. Mg(2+) is required as a cofactor. It depends on Mn(2+) as a cofactor.

The enzyme catalyses L-seryl-[protein] + ATP = 3-O-(5'-adenylyl)-L-seryl-[protein] + diphosphate. It catalyses the reaction L-threonyl-[protein] + ATP = 3-O-(5'-adenylyl)-L-threonyl-[protein] + diphosphate. The catalysed reaction is L-tyrosyl-[protein] + ATP = O-(5'-adenylyl)-L-tyrosyl-[protein] + diphosphate. It carries out the reaction L-histidyl-[protein] + UTP = N(tele)-(5'-uridylyl)-L-histidyl-[protein] + diphosphate. The enzyme catalyses L-seryl-[protein] + UTP = O-(5'-uridylyl)-L-seryl-[protein] + diphosphate. It catalyses the reaction L-tyrosyl-[protein] + UTP = O-(5'-uridylyl)-L-tyrosyl-[protein] + diphosphate. Its function is as follows. Nucleotidyltransferase involved in the post-translational modification of proteins. It can catalyze the addition of adenosine monophosphate (AMP) or uridine monophosphate (UMP) to a protein, resulting in modifications known as AMPylation and UMPylation. The protein is Protein nucleotidyltransferase YdiU of Roseobacter denitrificans (strain ATCC 33942 / OCh 114) (Erythrobacter sp. (strain OCh 114)).